The sequence spans 80 residues: Large ribosomal subunit protein eL20 (80 aa).

This sequence belongs to the eukaryotic ribosomal protein eL20 family. In terms of assembly, part of the 50S ribosomal subunit. Binds 23S rRNA.

The polypeptide is Large ribosomal subunit protein eL20 (Methanopyrus kandleri (strain AV19 / DSM 6324 / JCM 9639 / NBRC 100938)).